A 217-amino-acid chain; its full sequence is GTP cyclohydrolase-2 (217 aa).

Residue 50–54 coordinates GTP; sequence RIHSE. Residues cysteine 55, cysteine 66, and cysteine 68 each coordinate Zn(2+). GTP contacts are provided by residues glutamine 71, 93–95, and threonine 115; that span reads EGR. Aspartate 127 serves as the catalytic Proton acceptor. Arginine 129 serves as the catalytic Nucleophile. Residues threonine 150 and lysine 155 each contribute to the GTP site.

The protein belongs to the GTP cyclohydrolase II family. Zn(2+) serves as cofactor.

It catalyses the reaction GTP + 4 H2O = 2,5-diamino-6-hydroxy-4-(5-phosphoribosylamino)-pyrimidine + formate + 2 phosphate + 3 H(+). It functions in the pathway cofactor biosynthesis; riboflavin biosynthesis; 5-amino-6-(D-ribitylamino)uracil from GTP: step 1/4. In terms of biological role, catalyzes the conversion of GTP to 2,5-diamino-6-ribosylamino-4(3H)-pyrimidinone 5'-phosphate (DARP), formate and pyrophosphate. The polypeptide is GTP cyclohydrolase-2 (Actinobacillus succinogenes (strain ATCC 55618 / DSM 22257 / CCUG 43843 / 130Z)).